Reading from the N-terminus, the 391-residue chain is Flagellin (391 aa).

The protein belongs to the bacterial flagellin family.

Its subcellular location is the secreted. The protein localises to the bacterial flagellum. In terms of biological role, flagellin is the subunit protein which polymerizes to form the filaments of bacterial flagella. This is Flagellin (flaA) from Bordetella bronchiseptica (strain ATCC BAA-588 / NCTC 13252 / RB50) (Alcaligenes bronchisepticus).